Reading from the N-terminus, the 264-residue chain is Thymidylate synthase (264 aa).

Residue arginine 21 participates in dUMP binding. Histidine 51 lines the (6R)-5,10-methylene-5,6,7,8-tetrahydrofolate pocket. Residue 126-127 (RR) coordinates dUMP. Cysteine 146 functions as the Nucleophile in the catalytic mechanism. DUMP contacts are provided by residues 166 to 169 (RSAD), asparagine 177, and 207 to 209 (HLY). Aspartate 169 serves as a coordination point for (6R)-5,10-methylene-5,6,7,8-tetrahydrofolate. Alanine 263 is a binding site for (6R)-5,10-methylene-5,6,7,8-tetrahydrofolate.

It belongs to the thymidylate synthase family. Bacterial-type ThyA subfamily. In terms of assembly, homodimer.

It is found in the cytoplasm. It catalyses the reaction dUMP + (6R)-5,10-methylene-5,6,7,8-tetrahydrofolate = 7,8-dihydrofolate + dTMP. Its pathway is pyrimidine metabolism; dTTP biosynthesis. In terms of biological role, catalyzes the reductive methylation of 2'-deoxyuridine-5'-monophosphate (dUMP) to 2'-deoxythymidine-5'-monophosphate (dTMP) while utilizing 5,10-methylenetetrahydrofolate (mTHF) as the methyl donor and reductant in the reaction, yielding dihydrofolate (DHF) as a by-product. This enzymatic reaction provides an intracellular de novo source of dTMP, an essential precursor for DNA biosynthesis. The protein is Thymidylate synthase of Legionella pneumophila (strain Lens).